A 239-amino-acid polypeptide reads, in one-letter code: LexA repressor (239 aa).

A DNA-binding region (H-T-H motif) is located at residues 26-46; sequence FDEMKEALDLASKSGIHRLIT. The interval 90–110 is disordered; it reads GSLGKTPPPPARPAPVATNDD. Catalysis depends on for autocatalytic cleavage activity residues Ser160 and Lys198.

This sequence belongs to the peptidase S24 family. Homodimer.

It carries out the reaction Hydrolysis of Ala-|-Gly bond in repressor LexA.. Represses a number of genes involved in the response to DNA damage (SOS response), including recA and lexA. In the presence of single-stranded DNA, RecA interacts with LexA causing an autocatalytic cleavage which disrupts the DNA-binding part of LexA, leading to derepression of the SOS regulon and eventually DNA repair. This chain is LexA repressor, found in Brucella anthropi (strain ATCC 49188 / DSM 6882 / CCUG 24695 / JCM 21032 / LMG 3331 / NBRC 15819 / NCTC 12168 / Alc 37) (Ochrobactrum anthropi).